The following is a 159-amino-acid chain: Ribosomal RNA large subunit methyltransferase H (159 aa).

S-adenosyl-L-methionine is bound by residues L76 and G108.

This sequence belongs to the RNA methyltransferase RlmH family. In terms of assembly, homodimer.

The protein localises to the cytoplasm. The enzyme catalyses pseudouridine(1915) in 23S rRNA + S-adenosyl-L-methionine = N(3)-methylpseudouridine(1915) in 23S rRNA + S-adenosyl-L-homocysteine + H(+). Its function is as follows. Specifically methylates the pseudouridine at position 1915 (m3Psi1915) in 23S rRNA. This is Ribosomal RNA large subunit methyltransferase H from Limosilactobacillus reuteri (strain DSM 20016) (Lactobacillus reuteri).